The primary structure comprises 579 residues: MANIGGSNAVSSAQGSQISDSPTTVDDRLDEHKETSTQSIDHSENITQSPTSLQKPPDESNATPVGFGEDGCQSDSQEYPNSWRLAAIMIGVCLAVFSMALDNTILATAIPKITDQFTSLGDVGWYGSVYPLTNCCLTLVFGKLYTFYSTKWVYLSALAVFEIGSLICGATPSSLGLIIGRAIAGLGSSGIYLGSMIILSQSVPLQKRPLFTSLVGGLYGVAGVAGPLLGGAFTDYVSWRWCFYINPLFGAVTALFILLFFDGKEPIKSPGKIKEQISQFDLIGLFFFLPGMISLLLALQWGGQQYNWQSGRIIGLFVCSICLLSIFIMVQWRQKEKATVTLRMIKNKNVWGASLFNFCITGSFLVFSYYLPVWFQSIKNVSATKSGLMNLPMLLGVILCSIISGYGVGRIGYYTPFMYAAPIVSAIGAGLLSTFQANFGPSQWIGYQALYGIGLGLGLSQPIVVIQAAIPLIDIPSAIAIVTFIQSLGGSVSVSIAQNVFRNELLRGLAQNAPKVDAHKLITAGPTTLRYVVPAELLERVLVAYNSAITHAFYVGAAFSVLAMIGALPIQWISVKGRE.

Positions 1–24 are enriched in polar residues; sequence MANIGGSNAVSSAQGSQISDSPTT. A disordered region spans residues 1-75; it reads MANIGGSNAV…GFGEDGCQSD (75 aa). Residues 25–35 show a composition bias toward basic and acidic residues; it reads VDDRLDEHKET. A compositionally biased stretch (polar residues) spans 36-54; that stretch reads STQSIDHSENITQSPTSLQ. Asn-45 carries N-linked (GlcNAc...) asparagine glycosylation. 9 consecutive transmembrane segments (helical) span residues 85–105, 121–141, 159–179, 183–203, 214–234, 241–261, 282–302, 310–330, and 355–375; these read LAAI…DNTI, GDVG…TLVF, AVFE…GLII, IAGL…SQSV, LVGG…GAFT, WCFY…LLFF, LIGL…LQWG, SGRI…FIMV, and LFNF…PVWF. An N-linked (GlcNAc...) asparagine glycan is attached at Asn-380. The next 5 membrane-spanning stretches (helical) occupy residues 388–408, 411–431, 439–459, 479–501, and 553–573; these read LMNL…GYGV, IGYY…GAGL, FGPS…GLGL, IAIV…QNVF, and FYVG…IQWI.

The protein belongs to the major facilitator superfamily. TCR/Tet family.

It is found in the peroxisome membrane. In terms of biological role, MFS-type transporter; part of the gene cluster that mediates the biosynthesis of 15-deoxyoxalicine B. The first step of the pathway is the synthesis of nicotinyl-CoA from nicotinic acid by the nicotinic acid-CoA ligase olcI. Nicotinyl-CoA is then a substrate of polyketide synthase olcA to produce 4-hydroxy-6-(3-pyridinyl)-2H-pyran-2-one (HPPO) which is further prenylated by the polyprenyl transferase olcH to yield geranylgeranyl-HPPO. Geranylgeranyl pyrophosphate is provided by the cluster-specific geranylgeranyl pyrophosphate synthase olcC. The FAD-dependent monooxygenase olcE catalyzes the epoxidation of geranylgeranyl-HPPO and the terpene cyclase olcD catalyzes the cyclization of the terpenoid component, resulting in the formation of the tricyclic terpene moiety seen in predecaturin E. The cytochrome P450 monooxygenase then catalyzes the allylic oxidation of predecaturin E, which is followed by spirocylization with concomitant loss of one molecule of water to form decaturin E. Decaturin E is the substrate of the cytochrome P450 monooxygenase olcJ which hydroxylates it at the C-29 position to form decaturin F. The short-chain dehydrogenase/reductase olcF may catalyze the oxidation of decaturin F to generate the 29-hydroxyl-27-one intermediate, and subsequent hemiacetal formation probably leads to the formation of decaturin C. The dioxygenase olcK may be a peroxisomal enzyme that catalyzes the hydroxylation of decaturin C into decaturin A once decaturin C is shuttled into the peroxisome by the MFS transporter olcL. Finally the cytochrome P450 monooxygenase olcB catalyzes the oxidative rearrangement to yield 15-deoxyoxalicine B. In the absence of olcJ, decaturin E may be shunted to a pathway in which it is oxidized to a ketone, possibly by olcF, to form decaturin D, which undergoes further allylic oxidation to yield decaturin G. Moreover, in the absence of oclK or oclL, oclB can convert decaturin C into 15-deoxyoxalicine A. The protein is MFS-type transporter olcL of Penicillium canescens.